Reading from the N-terminus, the 233-residue chain is 5'-methylthioadenosine/S-adenosylhomocysteine nucleosidase (233 aa).

Glu12 acts as the Proton acceptor in catalysis. Residues Gly78, Ile156, and Met177–Glu178 each bind substrate. Asp201 (proton donor) is an active-site residue.

This sequence belongs to the PNP/UDP phosphorylase family. MtnN subfamily.

It carries out the reaction S-adenosyl-L-homocysteine + H2O = S-(5-deoxy-D-ribos-5-yl)-L-homocysteine + adenine. The enzyme catalyses S-methyl-5'-thioadenosine + H2O = 5-(methylsulfanyl)-D-ribose + adenine. It catalyses the reaction 5'-deoxyadenosine + H2O = 5-deoxy-D-ribose + adenine. The protein operates within amino-acid biosynthesis; L-methionine biosynthesis via salvage pathway; S-methyl-5-thio-alpha-D-ribose 1-phosphate from S-methyl-5'-thioadenosine (hydrolase route): step 1/2. Catalyzes the irreversible cleavage of the glycosidic bond in both 5'-methylthioadenosine (MTA) and S-adenosylhomocysteine (SAH/AdoHcy) to adenine and the corresponding thioribose, 5'-methylthioribose and S-ribosylhomocysteine, respectively. Also cleaves 5'-deoxyadenosine, a toxic by-product of radical S-adenosylmethionine (SAM) enzymes, into 5-deoxyribose and adenine. This is 5'-methylthioadenosine/S-adenosylhomocysteine nucleosidase from Listeria welshimeri serovar 6b (strain ATCC 35897 / DSM 20650 / CCUG 15529 / CIP 8149 / NCTC 11857 / SLCC 5334 / V8).